Consider the following 347-residue polypeptide: Dihydroorotate dehydrogenase (quinone) (347 aa).

FMN contacts are provided by residues 61-65 (AGLDK) and T85. K65 is a substrate binding site. 110-114 (NRMGF) contributes to the substrate binding site. 2 residues coordinate FMN: N138 and N171. Residue N171 participates in substrate binding. Catalysis depends on S174, which acts as the Nucleophile. N176 contacts substrate. FMN-binding residues include K216 and T244. A substrate-binding site is contributed by 245–246 (NT). Residues G267, G296, and 317 to 318 (YT) each bind FMN.

Belongs to the dihydroorotate dehydrogenase family. Type 2 subfamily. Monomer. The cofactor is FMN.

It localises to the cell membrane. The catalysed reaction is (S)-dihydroorotate + a quinone = orotate + a quinol. The protein operates within pyrimidine metabolism; UMP biosynthesis via de novo pathway; orotate from (S)-dihydroorotate (quinone route): step 1/1. In terms of biological role, catalyzes the conversion of dihydroorotate to orotate with quinone as electron acceptor. The protein is Dihydroorotate dehydrogenase (quinone) of Azotobacter vinelandii (strain DJ / ATCC BAA-1303).